Here is a 107-residue protein sequence, read N- to C-terminus: Flagellar transcriptional regulator FlhD (107 aa).

It belongs to the FlhD family. In terms of assembly, homodimer; disulfide-linked. Forms a heterohexamer composed of two FlhC and four FlhD subunits. Each FlhC binds a FlhD dimer, forming a heterotrimer, and a hexamer assembles by dimerization of two heterotrimers.

Its subcellular location is the cytoplasm. Functionally, functions in complex with FlhC as a master transcriptional regulator that regulates transcription of several flagellar and non-flagellar operons by binding to their promoter region. Activates expression of class 2 flagellar genes, including fliA, which is a flagellum-specific sigma factor that turns on the class 3 genes. Also regulates genes whose products function in a variety of physiological pathways. The sequence is that of Flagellar transcriptional regulator FlhD from Bordetella avium (strain 197N).